The primary structure comprises 206 residues: MITIALPKGRIAEDTLAIFRKIFGSEFLFEDRKLILEEGNFRFLMVRNQDIPTYVTEGAADVGVVGLDVLEEHHPDVVRLLDLHIGKCRVCVGIKNDEELDYTQPELKIATKMPNIARNYFAQKATALKIIKLYGSIELAPLVGLSDAIVDVVETGSTMKQNGLKIAETIMQSSAHLIANKSSFIIKKDEILELYHKIKEQIPKTQ.

The protein belongs to the ATP phosphoribosyltransferase family. Short subfamily. As to quaternary structure, heteromultimer composed of HisG and HisZ subunits.

It is found in the cytoplasm. It catalyses the reaction 1-(5-phospho-beta-D-ribosyl)-ATP + diphosphate = 5-phospho-alpha-D-ribose 1-diphosphate + ATP. The protein operates within amino-acid biosynthesis; L-histidine biosynthesis; L-histidine from 5-phospho-alpha-D-ribose 1-diphosphate: step 1/9. Functionally, catalyzes the condensation of ATP and 5-phosphoribose 1-diphosphate to form N'-(5'-phosphoribosyl)-ATP (PR-ATP). Has a crucial role in the pathway because the rate of histidine biosynthesis seems to be controlled primarily by regulation of HisG enzymatic activity. This is ATP phosphoribosyltransferase from Campylobacter curvus (strain 525.92).